A 385-amino-acid polypeptide reads, in one-letter code: 1-deoxy-D-xylulose 5-phosphate reductoisomerase (385 aa).

6 residues coordinate NADPH: threonine 11, glycine 12, serine 13, isoleucine 14, glutamine 39, and asparagine 117. Lysine 118 lines the 1-deoxy-D-xylulose 5-phosphate pocket. Glutamate 119 contacts NADPH. Aspartate 143 serves as a coordination point for Mn(2+). The 1-deoxy-D-xylulose 5-phosphate site is built by serine 144, glutamate 145, serine 170, and histidine 193. Glutamate 145 contributes to the Mn(2+) binding site. Glycine 199 lines the NADPH pocket. Residues serine 206, asparagine 211, lysine 212, and glutamate 215 each contribute to the 1-deoxy-D-xylulose 5-phosphate site. Glutamate 215 contacts Mn(2+).

It belongs to the DXR family. The cofactor is Mg(2+). Mn(2+) serves as cofactor.

The enzyme catalyses 2-C-methyl-D-erythritol 4-phosphate + NADP(+) = 1-deoxy-D-xylulose 5-phosphate + NADPH + H(+). It participates in isoprenoid biosynthesis; isopentenyl diphosphate biosynthesis via DXP pathway; isopentenyl diphosphate from 1-deoxy-D-xylulose 5-phosphate: step 1/6. Functionally, catalyzes the NADPH-dependent rearrangement and reduction of 1-deoxy-D-xylulose-5-phosphate (DXP) to 2-C-methyl-D-erythritol 4-phosphate (MEP). The sequence is that of 1-deoxy-D-xylulose 5-phosphate reductoisomerase from Thermomicrobium roseum (strain ATCC 27502 / DSM 5159 / P-2).